The sequence spans 434 residues: ATP-dependent RNA helicase SUB2 (434 aa).

Positions 1-16 (MSGEEDLIDYSDDELN) are enriched in acidic residues. Residues 1 to 32 (MSGEEDLIDYSDDELNNETTAPASNGKKGDAA) form a disordered region. Residues 50–78 (TGFRDFLLKPELLRAIADCGFEHPSEVQQ) carry the Q motif motif. In terms of domain architecture, Helicase ATP-binding spans 81 to 256 (IPQAMLGGDI…RKFMQNPTEH (176 aa)). Position 94–101 (94–101 (AKSGLGKT)) interacts with ATP. The DEAD box signature appears at 203–206 (DECD). The 162-residue stretch at 268–429 (GLQQYYIPLE…EFPKEGIDAS (162 aa)) folds into the Helicase C-terminal domain.

This sequence belongs to the DEAD box helicase family. DECD subfamily.

The protein localises to the nucleus. The catalysed reaction is ATP + H2O = ADP + phosphate + H(+). In terms of biological role, ATP-binding RNA helicase involved in transcription elongation and required for the export of mRNA out of the nucleus. SUB2 also plays a role in pre-mRNA splicing and spliceosome assembly. May be involved in rDNA and telomeric silencing, and maintenance of genome integrity. The sequence is that of ATP-dependent RNA helicase SUB2 (SUB2) from Chaetomium globosum (strain ATCC 6205 / CBS 148.51 / DSM 1962 / NBRC 6347 / NRRL 1970) (Soil fungus).